A 347-amino-acid chain; its full sequence is Oxygen sensor histidine kinase NreB (347 aa).

Residues Cys59, Cys62, Cys74, and Cys77 each contribute to the [4Fe-4S] cluster site. Positions 153-347 (RISRELHDGI…IVTLEVPITD (195 aa)) constitute a Histidine kinase domain. His159 carries the phosphohistidine; by autocatalysis modification.

[4Fe-4S] cluster is required as a cofactor. In terms of processing, autophosphorylated.

The protein resides in the cytoplasm. The enzyme catalyses ATP + protein L-histidine = ADP + protein N-phospho-L-histidine.. Its activity is regulated as follows. Activated by cysteine desulfurase, Fe(2+) ions and cysteine and inhibited by oxygen and ADP. In terms of biological role, member of the two-component regulatory system NreB/NreC involved in the control of dissimilatory nitrate/nitrite reduction in response to oxygen. NreB functions as a direct oxygen sensor histidine kinase which is autophosphorylated, in the absence of oxygen, probably at the conserved histidine residue, and transfers its phosphate group probably to a conserved aspartate residue of NreC. NreB/NreC activates the expression of the nitrate (narGHJI) and nitrite (nir) reductase operons, as well as the putative nitrate transporter gene narT. In Staphylococcus carnosus (strain TM300), this protein is Oxygen sensor histidine kinase NreB (nreB).